We begin with the raw amino-acid sequence, 319 residues long: Aspartate carbamoyltransferase catalytic subunit (319 aa).

Positions 57 and 58 each coordinate carbamoyl phosphate. K85 serves as a coordination point for L-aspartate. Positions 107, 135, and 138 each coordinate carbamoyl phosphate. L-aspartate-binding residues include R168 and R222. Carbamoyl phosphate is bound by residues G263 and P264.

This sequence belongs to the aspartate/ornithine carbamoyltransferase superfamily. ATCase family. As to quaternary structure, heterododecamer (2C3:3R2) of six catalytic PyrB chains organized as two trimers (C3), and six regulatory PyrI chains organized as three dimers (R2).

It catalyses the reaction carbamoyl phosphate + L-aspartate = N-carbamoyl-L-aspartate + phosphate + H(+). The protein operates within pyrimidine metabolism; UMP biosynthesis via de novo pathway; (S)-dihydroorotate from bicarbonate: step 2/3. Its function is as follows. Catalyzes the condensation of carbamoyl phosphate and aspartate to form carbamoyl aspartate and inorganic phosphate, the committed step in the de novo pyrimidine nucleotide biosynthesis pathway. This chain is Aspartate carbamoyltransferase catalytic subunit, found in Paracoccus denitrificans (strain Pd 1222).